The chain runs to 343 residues: GTPase Obg (343 aa).

One can recognise an Obg domain in the interval 1–159 (MKYIDEVKIQ…FELKLELRVL (159 aa)). In terms of domain architecture, OBG-type G spans 160 to 334 (ADVGLLGLPN…LTYAIMGYLE (175 aa)). GTP contacts are provided by residues 166–173 (GLPNAGKS), 191–195 (FTTLY), 213–216 (DIPG), 284–287 (NKVD), and 315–317 (SAL). Mg(2+)-binding residues include S173 and T193.

The protein belongs to the TRAFAC class OBG-HflX-like GTPase superfamily. OBG GTPase family. Monomer. The cofactor is Mg(2+).

The protein localises to the cytoplasm. In terms of biological role, an essential GTPase which binds GTP, GDP and possibly (p)ppGpp with moderate affinity, with high nucleotide exchange rates and a fairly low GTP hydrolysis rate. Plays a role in control of the cell cycle, stress response, ribosome biogenesis and in those bacteria that undergo differentiation, in morphogenesis control. The polypeptide is GTPase Obg (Nitrosomonas eutropha (strain DSM 101675 / C91 / Nm57)).